We begin with the raw amino-acid sequence, 498 residues long: Nucleoprotein (498 aa).

A Unconventional nuclear localization signal motif is present at residues 1 to 18 (MASQGTKRSYEQMETDGE). Positions 1 to 21 (MASQGTKRSYEQMETDGERQN) are disordered. The span at 8–21 (RSYEQMETDGERQN) shows a compositional bias: basic and acidic residues. The Bipartite nuclear localization signal motif lies at 198-216 (KRGINDRNFWRGENGRKTR).

Belongs to the influenza viruses nucleoprotein family. Homomultimerizes to form the nucleocapsid. May bind host exportin-1/XPO1. Binds to viral genomic RNA. Protein-RNA contacts are mediated by a combination of electrostatic interactions between positively charged residues and the phosphate backbone and planar interactions between aromatic side chains and bases. In terms of processing, late in virus-infected cells, may be cleaved from a 56-kDa protein to a 53-kDa protein by a cellular caspase. This cleavage might be a marker for the onset of apoptosis in infected cells or have a specific function in virus host interaction.

It is found in the virion. The protein localises to the host nucleus. Functionally, encapsidates the negative strand viral RNA, protecting it from nucleases. The encapsidated genomic RNA is termed the ribonucleoprotein (RNP) and serves as template for transcription and replication. The RNP needs to be localized in the host nucleus to start an infectious cycle, but is too large to diffuse through the nuclear pore complex. NP comprises at least 2 nuclear localization signals that are responsible for the active RNP import into the nucleus through cellular importin alpha/beta pathway. Later in the infection, nclear export of RNPs are mediated through viral proteins NEP interacting with M1 which binds nucleoproteins. It is possible that nucleoprotein binds directly host exportin-1/XPO1 and plays an active role in RNPs nuclear export. M1 interaction with RNP seems to hide nucleoprotein's nuclear localization signals. Soon after a virion infects a new cell, M1 dissociates from the RNP under acidification of the virion driven by M2 protein. Dissociation of M1 from RNP unmasks nucleoprotein's nuclear localization signals, targeting the RNP to the nucleus. This Aves (whales) protein is Nucleoprotein.